The sequence spans 420 residues: Homeobox-containing protein 1 (420 aa).

In terms of domain architecture, HNF-p1 spans 18–49 (DEPRFTIEQIDLLQRLRRTGMTKHEILHALET). Residues 56–139 (EHSDKFGRRS…GKMSPTRYHA (84 aa)) are disordered. Lys60 participates in a covalent cross-link: Glycyl lysine isopeptide (Lys-Gly) (interchain with G-Cter in SUMO2). 2 stretches are compositionally biased toward low complexity: residues 64 to 73 (RSSYGGSSYG) and 81 to 93 (ASSSTATASTQTQ). Polar residues predominate over residues 94-132 (HSGMSPSPSNSYDTSPQPCTTNQNGRENNERLSTSNGKM). Lys131 participates in a covalent cross-link: Glycyl lysine isopeptide (Lys-Gly) (interchain with G-Cter in SUMO2). The 97-residue stretch at 145-241 (RSYSFEASEE…PGATLSMRPA (97 aa)) folds into the POU-specific atypical domain. Position 148 is a phosphoserine (Ser148). A Glycyl lysine isopeptide (Lys-Gly) (interchain with G-Cter in SUMO2) cross-link involves residue Lys161. Ser170 is modified (phosphoserine). Residues Lys174, Lys217, and Lys310 each participate in a glycyl lysine isopeptide (Lys-Gly) (interchain with G-Cter in SUMO2) cross-link. Positions 267–341 (RRGSRFTWRK…NRRKEIKRRA (75 aa)) form a DNA-binding region, homeobox. The tract at residues 353 to 385 (IDVQSPGGHSNSDDVDGNDYSEQDDSTSHSDHQ) is disordered. Positions 365–377 (DDVDGNDYSEQDD) are enriched in acidic residues. Residue Lys413 forms a Glycyl lysine isopeptide (Lys-Gly) (interchain with G-Cter in SUMO1); alternate linkage. Residue Lys413 forms a Glycyl lysine isopeptide (Lys-Gly) (interchain with G-Cter in SUMO2); alternate linkage.

As to quaternary structure, associates with the telomerase holoenzyme complex. Interacts with DKC1, XRCC6 and COIL. In terms of tissue distribution, ubiquitous. Detected in pancreas, brain, spleen, placenta, prostate, thymus, liver, heart, bone marrow, skeletal muscle, stomach, uterus, testis, kidney, ovary, colon, lung, cardiac muscle and thyroid gland.

It localises to the nucleus. The protein resides in the cytoplasm. The protein localises to the chromosome. Its subcellular location is the telomere. It is found in the cajal body. It localises to the PML body. Its function is as follows. Binds directly to 5'-TTAGGG-3' repeats in telomeric DNA. Associates with the telomerase complex at sites of active telomere processing and positively regulates telomere elongation. Important for TERT binding to chromatin, indicating a role in recruitment of the telomerase complex to telomeres. Also plays a role in the alternative lengthening of telomeres (ALT) pathway in telomerase-negative cells where it promotes formation and/or maintenance of ALT-associated promyelocytic leukemia bodies (APBs). Enhances formation of telomere C-circles in ALT cells, suggesting a possible role in telomere recombination. Might also be involved in the DNA damage response at telomeres. In Homo sapiens (Human), this protein is Homeobox-containing protein 1.